The primary structure comprises 326 residues: Glycerol-3-phosphate dehydrogenase [NAD(P)+] (326 aa).

3 residues coordinate NADPH: W13, R33, and K107. The sn-glycerol 3-phosphate site is built by K107, G135, and S137. A139 is an NADPH binding site. Residues K190, D243, S253, R254, and N255 each coordinate sn-glycerol 3-phosphate. K190 functions as the Proton acceptor in the catalytic mechanism. R254 serves as a coordination point for NADPH. L273 and E275 together coordinate NADPH.

Belongs to the NAD-dependent glycerol-3-phosphate dehydrogenase family.

It is found in the cytoplasm. The enzyme catalyses sn-glycerol 3-phosphate + NAD(+) = dihydroxyacetone phosphate + NADH + H(+). It catalyses the reaction sn-glycerol 3-phosphate + NADP(+) = dihydroxyacetone phosphate + NADPH + H(+). Its pathway is membrane lipid metabolism; glycerophospholipid metabolism. Its function is as follows. Catalyzes the reduction of the glycolytic intermediate dihydroxyacetone phosphate (DHAP) to sn-glycerol 3-phosphate (G3P), the key precursor for phospholipid synthesis. In Brucella abortus (strain 2308), this protein is Glycerol-3-phosphate dehydrogenase [NAD(P)+].